The following is a 770-amino-acid chain: Proton-coupled zinc antiporter SLC30A5 (770 aa).

Residues 1–29 lie on the Cytoplasmic side of the membrane; the sequence is MEEKYSSQALAGGGVLGPVDVPSARLTRY. A helical membrane pass occupies residues 30–50; it reads IVLLCFAKFLKAVGLFESYDL. Over 51-53 the chain is Lumenal; it reads LKA. The helical transmembrane segment at 54–74 threads the bilayer; that stretch reads VHLVQFIFIVKLGSAFFMVLF. The Cytoplasmic portion of the chain corresponds to 75-95; that stretch reads QKPFSSGKVVTKHQWIKIFKH. Residues 96-116 traverse the membrane as a helical segment; sequence AVVGCIISLLWFFGLTLCGPL. Position 117 (arginine 117) is a topological domain, lumenal. Residues 118–138 form a helical membrane-spanning segment; sequence TLLLFEHSDVVVLSLLSVLFT. At 139 to 149 the chain is on the cytoplasmic side; sequence SSGGGPAKTRG. A helical transmembrane segment spans residues 150–170; sequence AAFFIIAVICLLLFDNDDLMA. Over 171-190 the chain is Lumenal; that stretch reads KIAEHPEGHHDSALTHVLYT. A helical membrane pass occupies residues 191-211; it reads VIAFLGVADHKGGVLLLVLAL. At 212-235 the chain is on the cytoplasmic side; it reads CCKVGFHMASRKLSVDVGGAKRLQ. The chain crosses the membrane as a helical span at residues 236-256; that stretch reads ALSHLVSVLLLCPWVIVLSLT. At 257–264 the chain is on the lumenal side; it reads TESKVESW. A helical membrane pass occupies residues 265–285; sequence SSLIMPFITVIFFVVILDFYV. Residues 286-300 lie on the Cytoplasmic side of the membrane; that stretch reads ESICSVKMESSKCAR. The helical transmembrane segment at 301–321 threads the bilayer; sequence YGSFLIFISALLFGNFWTHPI. Residues 322–339 lie on the Lumenal side of the membrane; that stretch reads TDQLRAMNKPAHHESTEH. A helical transmembrane segment spans residues 340–360; sequence VLSGGVVVSAVFFILSANILS. Over 361–415 the chain is Cytoplasmic; the sequence is SPSRKGQKGTLIGYSPEGTPLYNFMGDAIQQSSQSLPRFIKESLKQILEEYDSRQ. Residues 416–436 traverse the membrane as a helical segment; it reads IFYFLCLNLAFTFVELFYGVW. Topologically, residues 437-445 are lumenal; the sequence is TNSLGLISD. Residues 446–466 form a helical membrane-spanning segment; sequence GFHMLFDCSALVMGLFAALMT. Zn(2+) is bound by residues histidine 448 and aspartate 452. Topologically, residues 467–480 are cytoplasmic; it reads RWKATRIFSYGYGR. Residues 481-501 form a helical membrane-spanning segment; it reads VEILSGFINGLFLMVIAFFVF. The Lumenal portion of the chain corresponds to 502–517; sequence MESVARLVDPPDIDTN. The chain crosses the membrane as a helical span at residues 518–538; sequence MLTPVSVGGLIVNLVGICAFS. The interval 539 to 579 is his-rich loop; required for zinc transport; the sequence is HAHSHGASRGGCHSHEHSHSYHGHSHSHGHGHSHNDHGHSH. The Cytoplasmic portion of the chain corresponds to 539 to 597; it reads HAHSHGASRGGCHSHEHSHSYHGHSHSHGHGHSHNDHGHSHGHSHVSSGGGMNTNMRGV. The interval 548-586 is disordered; sequence GGCHSHEHSHSYHGHSHSHGHGHSHNDHGHSHGHSHVSS. A compositionally biased stretch (basic residues) spans 558–570; that stretch reads SYHGHSHSHGHGH. Residues 598 to 618 traverse the membrane as a helical segment; sequence FLHVLADTLGSVGVIVSTTFI. Histidine 600 and aspartate 604 together coordinate Zn(2+). Residues 619 to 622 lie on the Lumenal side of the membrane; sequence QQFG. A helical transmembrane segment spans residues 623-643; that stretch reads WLIADPLCSLFIATLIFLSVI. Residues 644 to 770 lie on the Cytoplasmic side of the membrane; it reads PLLKDACQVL…KYYKDGTYIM (127 aa).

Belongs to the cation diffusion facilitator (CDF) transporter (TC 2.A.4) family. SLC30A subfamily. As to quaternary structure, heterodimer with SLC30A6/ZNT6; form a functional zinc ion transmembrane transporter.

It localises to the golgi apparatus. The protein resides in the golgi stack membrane. It is found in the cytoplasmic vesicle. The protein localises to the COPII-coated vesicle membrane. Its subcellular location is the secretory vesicle membrane. It localises to the trans-Golgi network membrane. The catalysed reaction is Zn(2+)(in) + 2 H(+)(out) = Zn(2+)(out) + 2 H(+)(in). Together with SLC30A6 forms a functional proton-coupled zinc ion antiporter mediating zinc entry into the lumen of organelles along the secretory pathway. By contributing to zinc ion homeostasis within the early secretory pathway, regulates the activation and folding of enzymes like alkaline phosphatases and enzymes involved in phosphatidylinositol glycan anchor biosynthesis. The chain is Proton-coupled zinc antiporter SLC30A5 from Gallus gallus (Chicken).